The sequence spans 437 residues: Xylose isomerase (437 aa).

Residues H101 and D104 contribute to the active site. E232, E268, H271, D296, D307, D309, and D339 together coordinate Mg(2+).

The protein belongs to the xylose isomerase family. Homotetramer. It depends on Mg(2+) as a cofactor.

The protein localises to the cytoplasm. The enzyme catalyses alpha-D-xylose = alpha-D-xylulofuranose. This Mannheimia succiniciproducens (strain KCTC 0769BP / MBEL55E) protein is Xylose isomerase.